The primary structure comprises 397 residues: Phosphopentomutase (397 aa).

Mn(2+) is bound by residues Asp-12, Asp-289, His-294, Asp-330, His-331, and His-342.

It belongs to the phosphopentomutase family. The cofactor is Mn(2+).

The protein resides in the cytoplasm. The enzyme catalyses 2-deoxy-alpha-D-ribose 1-phosphate = 2-deoxy-D-ribose 5-phosphate. It catalyses the reaction alpha-D-ribose 1-phosphate = D-ribose 5-phosphate. It participates in carbohydrate degradation; 2-deoxy-D-ribose 1-phosphate degradation; D-glyceraldehyde 3-phosphate and acetaldehyde from 2-deoxy-alpha-D-ribose 1-phosphate: step 1/2. Functionally, isomerase that catalyzes the conversion of deoxy-ribose 1-phosphate (dRib-1-P) and ribose 1-phosphate (Rib-1-P) to deoxy-ribose 5-phosphate (dRib-5-P) and ribose 5-phosphate (Rib-5-P), respectively. The protein is Phosphopentomutase of Limosilactobacillus reuteri (strain DSM 20016) (Lactobacillus reuteri).